Reading from the N-terminus, the 715-residue chain is Solute carrier organic anion transporter family member 1C1 (715 aa).

Residues Met1–Lys43 are Cytoplasmic-facing. Residues Val44–Leu63 form a helical membrane-spanning segment. The Extracellular segment spans residues Lys64–Gly82. A helical transmembrane segment spans residues Ile83 to Gly103. Over Ala104–Pro109 the chain is Cytoplasmic. The helical transmembrane segment at Lys110 to Glu134 threads the bilayer. Residues Lys135–Ser187 lie on the Extracellular side of the membrane. A helical membrane pass occupies residues Ser188–Asp216. The Cytoplasmic portion of the chain corresponds to Asp217 to Ala235. The helical transmembrane segment at Ile236–Ile256 threads the bilayer. At Gly257–Val274 the chain is on the extracellular side. Residues Gly275 to Pro299 traverse the membrane as a helical segment. Topologically, residues Lys300–Thr351 are cytoplasmic. Residues Leu352–Phe373 traverse the membrane as a helical segment. Topologically, residues Gly374 to Lys393 are extracellular. Residues Ala394–Met417 form a helical membrane-spanning segment. Topologically, residues Lys418 to Arg421 are cytoplasmic. A helical membrane pass occupies residues Leu422–Leu445. The Extracellular portion of the chain corresponds to Phe446–Phe557. The N-linked (GlcNAc...) asparagine glycan is linked to Asn452. Positions Arg473–Gly528 constitute a Kazal-like domain. Disulfide bonds link Cys479-Cys509, Cys485-Cys505, and Cys494-Cys526. Asn523 and Asn536 each carry an N-linked (GlcNAc...) asparagine glycan. A helical transmembrane segment spans residues Leu558–Leu580. Residues Arg581–Ser589 are Cytoplasmic-facing. A helical membrane pass occupies residues Phe590–Ile615. The Extracellular segment spans residues Asp616–Thr649. A helical transmembrane segment spans residues Thr650 to Leu667. Residues Lys668–Leu715 are Cytoplasmic-facing.

It belongs to the organo anion transporter (TC 2.A.60) family. In terms of tissue distribution, widely expressed throughout the brain except in the cerebellum. Not detected in kidney, heart, lung, skeletal muscle, spleen, liver, nor testis. Highly expressed in cerebral microvessels throughout the brain and in the choroid plexus (at mRNA and protein level).

It localises to the cell membrane. It carries out the reaction 3,3',5'-triiodo-L-thyronine(out) = 3,3',5'-triiodo-L-thyronine(in). It catalyses the reaction L-thyroxine(out) = L-thyroxine(in). The catalysed reaction is L-thyroxine sulfate(out) = L-thyroxine sulfate(in). The enzyme catalyses 17beta-estradiol 17-O-(beta-D-glucuronate)(out) = 17beta-estradiol 17-O-(beta-D-glucuronate)(in). It carries out the reaction 3,3',5-triiodo-L-thyronine(out) = 3,3',5-triiodo-L-thyronine(in). Its function is as follows. Mediates the Na(+)-independent high affinity transport of thyroid hormones at the plasma membrane of brain capillary endothelial cells. The transport activity of substrates L-thyroxine (T4) and 3,3',5'-triiodo-L-thyronine (reverse T3, rT3) is much greater than that of 3,3',5-triiodo-L-thyronine (T3). The prehormone, T4, is the major form in the circulating blood and is converted to the active form, T3, by the iodothyronine-deiodinase in peripheral organs. T3 plays an essential role in brain development via binding to specific nuclear receptors (thyroid hormone receptor). Also transports organic anions such as the conjugated steroid 17-beta-glucuronosyl estradiol (17beta-estradiol 17-O-(beta-D-glucuronate)). Transports T4 and estrone-3-sulfate in a pH-insensitive manner. May serve as a drug efflux system at the blood brain barrier. The chain is Solute carrier organic anion transporter family member 1C1 (Slco1c1) from Mus musculus (Mouse).